Consider the following 282-residue polypeptide: Stress response regulator protein 1 (282 aa).

Composition is skewed to low complexity over residues asparagine 12–threonine 30 and asparagine 45–asparagine 58. Disordered regions lie at residues asparagine 12–valine 31, aspartate 43–aspartate 84, and leucine 112–valine 139. Positions serine 66–tyrosine 77 are enriched in polar residues. Low complexity predominate over residues serine 125–valine 139. One can recognise a Response regulatory domain in the interval serine 155–aspartate 273. 4-aspartylphosphate is present on aspartate 206.

Required for stress adaptation, morphogenesis and virulence. The sequence is that of Stress response regulator protein 1 (SRR1) from Candida albicans (strain SC5314 / ATCC MYA-2876) (Yeast).